Consider the following 652-residue polypeptide: Threonine--tRNA ligase (652 aa).

A TGS domain is found at Met-1–Thr-63. The interval Asp-246–Pro-545 is catalytic. Zn(2+) contacts are provided by Cys-340, His-391, and His-522.

Belongs to the class-II aminoacyl-tRNA synthetase family. As to quaternary structure, homodimer. Zn(2+) is required as a cofactor.

It localises to the cytoplasm. It carries out the reaction tRNA(Thr) + L-threonine + ATP = L-threonyl-tRNA(Thr) + AMP + diphosphate + H(+). Catalyzes the attachment of threonine to tRNA(Thr) in a two-step reaction: L-threonine is first activated by ATP to form Thr-AMP and then transferred to the acceptor end of tRNA(Thr). Also edits incorrectly charged L-seryl-tRNA(Thr). The sequence is that of Threonine--tRNA ligase from Leuconostoc mesenteroides subsp. mesenteroides (strain ATCC 8293 / DSM 20343 / BCRC 11652 / CCM 1803 / JCM 6124 / NCDO 523 / NBRC 100496 / NCIMB 8023 / NCTC 12954 / NRRL B-1118 / 37Y).